The sequence spans 978 residues: Mast/stem cell growth factor receptor Kit (978 aa).

The signal sequence occupies residues 1–25 (MRGARGAWDFLFVLLLLLLVQTGSS). The Extracellular portion of the chain corresponds to 26–525 (QPSVSPGELS…QIHAHTLFTP (500 aa)). 5 Ig-like C2-type domains span residues 27–112 (PSVS…VFVR), 121–205 (DLPL…LKVR), 212–309 (PVVS…LEVV), 318–411 (PMMN…VNVN), and 414–508 (PEIL…FNFA). The cysteines at positions 58 and 97 are disulfide-linked. N-linked (GlcNAc...) asparagine glycosylation is found at N94, N130, and N145. 3 disulfides stabilise this stretch: C136-C186, C151-C183, and C233-C291. N-linked (GlcNAc...) asparagine glycans are attached at residues N284, N294, N301, N321, N353, N368, N401, N464, and N487. C429 and C492 are disulfide-bonded. The chain crosses the membrane as a helical span at residues 526–546 (LLIGFVIAAGLMCIFVMILTY). Topologically, residues 547 to 978 (KYLQKPMYEV…TQPLLVHEDV (432 aa)) are cytoplasmic. A phosphotyrosine mark is found at Y548 and Y554. A Mg(2+)-binding site is contributed by Y569. 2 positions are modified to phosphotyrosine; by autocatalysis: Y569 and Y571. Positions 569–571 (YVY) are important for interaction with phosphotyrosine-binding proteins. The Protein kinase domain maps to 590 to 939 (LSFGKTLGAG…ISESTNHIYS (350 aa)). ATP contacts are provided by residues 597–604 (GAGAFGKV), K624, and 672–678 (EYCCYGD). Phosphotyrosine; by autocatalysis occurs at positions 704 and 722. The residue at position 731 (Y731) is a Phosphotyrosine. 2 positions are modified to phosphoserine; by PKC/PRKCA: S743 and S748. Catalysis depends on D794, which acts as the Proton acceptor. Position 798 (R798) interacts with ATP. Positions 799 and 812 each coordinate Mg(2+). Phosphoserine is present on S823. Y825 is subject to Phosphotyrosine; by autocatalysis. The residue at position 893 (S893) is a Phosphoserine. Position 902 is a phosphotyrosine (Y902). The residue at position 938 (Y938) is a Phosphotyrosine; by autocatalysis. Position 961 is a phosphoserine (S961).

The protein belongs to the protein kinase superfamily. Tyr protein kinase family. CSF-1/PDGF receptor subfamily. In terms of assembly, monomer in the absence of bound KITLG/SCF. Homodimer in the presence of bound KITLG/SCF, forming a heterotetramer with two KITLG/SCF molecules. Interacts (via phosphorylated tyrosine residues) with the adapter proteins GRB2 and GRB7 (via SH2 domain), and SH2B2/APS. Interacts (via C-terminus) with MPDZ (via the tenth PDZ domain). Interacts (via phosphorylated tyrosine residues) with PIK3R1 and PIK3CD. Interacts (via phosphorylated tyrosine) with CRK (isoform Crk-II), FYN, SHC1 and MATK/CHK (via SH2 domain). Interacts with LYN and FES/FPS. Interacts (via phosphorylated tyrosine residues) with the protein phosphatases PTPN6/SHP-1 (via SH2 domain), PTPN11/SHP-2 (via SH2 domain) and PTPRU. Interacts with PLCG1. Interacts with DOK1 and TEC. Interacts with IL1RAP (independent of stimulation with KITLG/SCF). A mast cell-specific KITLG/SCF-induced interleukin-33 signaling complex contains IL1RL1, IL1RAP, KIT and MYD88. Post-translationally, ubiquitinated by SOCS6. KIT is rapidly ubiquitinated after autophosphorylation induced by KITLG/SCF binding, leading to internalization and degradation. In terms of processing, autophosphorylated on tyrosine residues. KITLG/SCF binding promotes autophosphorylation. Phosphorylated tyrosine residues are important for interaction with specific binding partners.

The protein resides in the cell membrane. It carries out the reaction L-tyrosyl-[protein] + ATP = O-phospho-L-tyrosyl-[protein] + ADP + H(+). Present in an inactive conformation in the absence of bound ligand. KITLG/SCF binding leads to dimerization and activation by autophosphorylation on tyrosine residues. Activity is down-regulated by PRKCA-mediated phosphorylation on serine residues. Its function is as follows. Tyrosine-protein kinase that acts as a cell-surface receptor for the cytokine KITLG/SCF and plays an essential role in the regulation of cell survival and proliferation, hematopoiesis, stem cell maintenance, gametogenesis, mast cell development, migration and function, and in melanogenesis. In response to KITLG/SCF binding, KIT can activate several signaling pathways. Phosphorylates PIK3R1, PLCG1, SH2B2/APS and CBL. Activates the AKT1 signaling pathway by phosphorylation of PIK3R1, the regulatory subunit of phosphatidylinositol 3-kinase. Activated KIT also transmits signals via GRB2 and activation of RAS, RAF1 and the MAP kinases MAPK1/ERK2 and/or MAPK3/ERK1. Promotes activation of STAT family members STAT1, STAT3, STAT5A and STAT5B. Activation of PLCG1 leads to the production of the cellular signaling molecules diacylglycerol and inositol 1,4,5-trisphosphate. KIT signaling is modulated by protein phosphatases, and by rapid internalization and degradation of the receptor. Activated KIT promotes phosphorylation of the protein phosphatases PTPN6/SHP-1 and PTPRU, and of the transcription factors STAT1, STAT3, STAT5A and STAT5B. Promotes phosphorylation of PIK3R1, CBL, CRK (isoform Crk-II), LYN, MAPK1/ERK2 and/or MAPK3/ERK1, PLCG1, SRC and SHC1. This is Mast/stem cell growth factor receptor Kit (KIT) from Capra hircus (Goat).